We begin with the raw amino-acid sequence, 373 residues long: Inhibitor of nuclear factor kappa-B kinase-interacting protein (373 aa).

Positions 1 to 11 (MSEVKSRKKPG) are enriched in basic residues. The disordered stretch occupies residues 1–38 (MSEVKSRKKPGPKVAAPEPEKRSDGRKNPEARGDAGWA). Residues 18-33 (EPEKRSDGRKNPEARG) show a composition bias toward basic and acidic residues. A helical membrane pass occupies residues 43-59 (GLSLLSLAMTLGLAWLV). 2 coiled-coil regions span residues 86-257 (LQSK…NKLS) and 285-324 (QDLIGTERKMEELTMQMFNMEDDMLRAVSEIMEMQKTLEG). An N-linked (GlcNAc...) asparagine glycan is attached at Asn151.

In terms of processing, N-glycosylated at Asn-151.

The protein resides in the endoplasmic reticulum membrane. In terms of biological role, target of p53/TP53 with pro-apoptotic function. The polypeptide is Inhibitor of nuclear factor kappa-B kinase-interacting protein (Ikbip) (Mus musculus (Mouse)).